The primary structure comprises 154 residues: Myoglobin (154 aa).

Residues 2–148 (GLSDGEWQLV…FRNDIAAKYK (147 aa)) enclose the Globin domain. Position 4 is a phosphoserine (Ser4). Nitrite is bound at residue His65. His65 contacts O2. At Thr68 the chain carries Phosphothreonine. His94 contributes to the heme b binding site.

This sequence belongs to the globin family. As to quaternary structure, monomeric.

It localises to the cytoplasm. It is found in the sarcoplasm. The enzyme catalyses Fe(III)-heme b-[protein] + nitric oxide + H2O = Fe(II)-heme b-[protein] + nitrite + 2 H(+). It catalyses the reaction H2O2 + AH2 = A + 2 H2O. Functionally, monomeric heme protein which primary function is to store oxygen and facilitate its diffusion within muscle tissues. Reversibly binds oxygen through a pentacoordinated heme iron and enables its timely and efficient release as needed during periods of heightened demand. Depending on the oxidative conditions of tissues and cells, and in addition to its ability to bind oxygen, it also has a nitrite reductase activity whereby it regulates the production of bioactive nitric oxide. Under stress conditions, like hypoxia and anoxia, it also protects cells against reactive oxygen species thanks to its pseudoperoxidase activity. The sequence is that of Myoglobin (MB) from Ctenodactylus gundi (Northern gundi).